A 230-amino-acid chain; its full sequence is MSPGNTTVVTTTVRNATPSLALDAGTIERFLAHSHRRRYPTRTDVFRPGDPAGTLYYVISGSVSIIAEEDDDRELVLGYFGSGEFVGEMGLFIESDTREVILRTRTQCELAEISYERLQQLFQTSLSPDAPKILYAIGVQLSKRLLDTTRKASRLAFLDVTDRIVRTLHDLAKEPEAMSHPQGTQLRVSRQELARLVGCSREMAGRVLKKLQADGLLHARGKTVVLYGTR.

Residue proline 18 to valine 139 participates in a nucleoside 3',5'-cyclic phosphate binding. The HTH crp-type domain occupies leucine 158–arginine 230. Positions arginine 190 to lysine 209 form a DNA-binding region, H-T-H motif.

As to quaternary structure, homodimer.

The protein localises to the cytoplasm. Its activity is regulated as follows. Allosterically inhibited by cyclic di-GMP (c-di-GMP), which binds to Clp and abolishes its ability to bind its target gene promoter. Functionally, global transcriptional regulator that regulates virulence factors production by activating or repressing the expression of a large set of genes in diffusible signal factor (DSF) pathway. This chain is CRP-like protein Clp (clp), found in Xanthomonas axonopodis pv. citri (strain 306).